The following is a 382-amino-acid chain: Chaperone protein DnaJ 2 (382 aa).

In terms of domain architecture, J spans 4-68; sequence DYYGLLGVSK…DKRRIVDLGG (65 aa). The CR-type zinc-finger motif lies at 132-214; it reads GVTKQVTVDT…CMGDGRIRAR (83 aa). 8 residues coordinate Zn(2+): Cys145, Cys148, Cys162, Cys165, Cys188, Cys191, Cys202, and Cys205. 4 CXXCXGXG motif repeats span residues 145-152, 162-169, 188-195, and 202-209; these read CDRCQGKG, CDTCGGRG, CPTCRGVG, and CQQCMGDG.

It belongs to the DnaJ family. In terms of assembly, homodimer. Interacts with RNase J. The cofactor is Zn(2+).

The protein localises to the cytoplasm. In terms of biological role, participates actively in the response to hyperosmotic and heat shock by preventing the aggregation of stress-denatured proteins and by disaggregating proteins, also in an autonomous, DnaK-independent fashion. Unfolded proteins bind initially to DnaJ; upon interaction with the DnaJ-bound protein, DnaK hydrolyzes its bound ATP, resulting in the formation of a stable complex. GrpE releases ADP from DnaK; ATP binding to DnaK triggers the release of the substrate protein, thus completing the reaction cycle. Several rounds of ATP-dependent interactions between DnaJ, DnaK and GrpE are required for fully efficient folding. Also involved, together with DnaK and GrpE, in the DNA replication of plasmids through activation of initiation proteins. Inhibits the beta-lactamase and RNase activity of RNase J. In Mycobacterium tuberculosis (strain ATCC 25618 / H37Rv), this protein is Chaperone protein DnaJ 2.